The sequence spans 384 residues: MTPIQNAQQIFNRQHKNLPEITVYAPGRVNIIGEHTDYNDGFVMPCAINFGTAVSGTKRDDHIWNVYAADLDETDEFSLNVEIPKSEHKWANYVRGVVKFIQERYPDFQQGANLVISGNVPLSSGLSSSAALEVAVGKFCQQLGDLPLSHTDIALNGQKAENQFVGANCGNMDQLISALGQENHLLMIDCRSLETTPTPVPQDVAVIIVNSNVPHDLVTGEYNTRRQQCEEAAKFFDVKALRDVSVEQFQKREAELTALSPLAAKRARHVVTENQRVLDAVEALKNNDLTCLGKLMEASHDSMRDDFEITVPQIDYLVELVQLVIGKSGGARMTGGGFGGCIVALAPHDKVDAVRKIIADNYEKTTGLKETFYVCTASQGVRVI.

A substrate-binding site is contributed by 34 to 37 (EHTD). 123–129 (SSGLSSS) contacts ATP. The Mg(2+) site is built by Ser129 and Glu161. Asp173 acts as the Proton acceptor in catalysis. Substrate is bound at residue Tyr222.

This sequence belongs to the GHMP kinase family. GalK subfamily.

The protein resides in the cytoplasm. It carries out the reaction alpha-D-galactose + ATP = alpha-D-galactose 1-phosphate + ADP + H(+). Its pathway is carbohydrate metabolism; galactose metabolism. Catalyzes the transfer of the gamma-phosphate of ATP to D-galactose to form alpha-D-galactose-1-phosphate (Gal-1-P). The chain is Galactokinase from Haemophilus influenzae (strain PittGG).